The following is a 360-amino-acid chain: Phosphate acyltransferase (360 aa).

The protein belongs to the PlsX family. In terms of assembly, homodimer. Probably interacts with PlsY.

Its subcellular location is the cytoplasm. The catalysed reaction is a fatty acyl-[ACP] + phosphate = an acyl phosphate + holo-[ACP]. The protein operates within lipid metabolism; phospholipid metabolism. Functionally, catalyzes the reversible formation of acyl-phosphate (acyl-PO(4)) from acyl-[acyl-carrier-protein] (acyl-ACP). This enzyme utilizes acyl-ACP as fatty acyl donor, but not acyl-CoA. The chain is Phosphate acyltransferase from Caulobacter vibrioides (strain ATCC 19089 / CIP 103742 / CB 15) (Caulobacter crescentus).